The chain runs to 91 residues: DNA-directed RNA polymerase subunit omega (91 aa).

Residues 66-91 (QMPPPLPNFPGAANREATGAEDAAGE) form a disordered region.

It belongs to the RNA polymerase subunit omega family. In terms of assembly, the RNAP catalytic core consists of 2 alpha, 1 beta, 1 beta' and 1 omega subunit. When a sigma factor is associated with the core the holoenzyme is formed, which can initiate transcription.

The catalysed reaction is RNA(n) + a ribonucleoside 5'-triphosphate = RNA(n+1) + diphosphate. In terms of biological role, promotes RNA polymerase assembly. Latches the N- and C-terminal regions of the beta' subunit thereby facilitating its interaction with the beta and alpha subunits. The protein is DNA-directed RNA polymerase subunit omega of Acidithiobacillus ferrooxidans (strain ATCC 23270 / DSM 14882 / CIP 104768 / NCIMB 8455) (Ferrobacillus ferrooxidans (strain ATCC 23270)).